The chain runs to 122 residues: Large ribosomal subunit protein uL14 (122 aa).

Belongs to the universal ribosomal protein uL14 family. Part of the 50S ribosomal subunit. Forms a cluster with proteins L3 and L19. In the 70S ribosome, L14 and L19 interact and together make contacts with the 16S rRNA in bridges B5 and B8.

Binds to 23S rRNA. Forms part of two intersubunit bridges in the 70S ribosome. The sequence is that of Large ribosomal subunit protein uL14 from Jannaschia sp. (strain CCS1).